The following is a 327-amino-acid chain: Voltage-dependent calcium channel gamma-4 subunit (327 aa).

Residues 1-9 are Cytoplasmic-facing; that stretch reads MVRCDRGLQ. Residues 10-30 traverse the membrane as a helical segment; sequence MLLTTAGAFAAFSLMAIAIGT. Residues 31-107 lie on the Extracellular side of the membrane; that stretch reads DYWLYSSAHI…EYLLRIVRAS (77 aa). N42 and N45 each carry an N-linked (GlcNAc...) asparagine glycan. The helical transmembrane segment at 108–128 threads the bilayer; it reads SVFPILSTILLLLGGLCIGAG. At 129–136 the chain is on the cytoplasmic side; it reads RIYSRKNN. The chain crosses the membrane as a helical span at residues 137 to 157; it reads IVLSAGILFVAAGLSNIIGII. The Extracellular segment spans residues 158 to 186; the sequence is VYISSNTGDPSDKRDEDKKNHYNYGWSFY. Residues 187 to 207 traverse the membrane as a helical segment; it reads FGALSFIVAETVGVLAVNIYI. The Cytoplasmic portion of the chain corresponds to 208-327; that stretch reads EKNKELRFKT…SMLNRRTTPV (120 aa). The interval 235 to 261 is disordered; sequence SYRYRRRRSRSSSRSTEASPSRDVSPM. The segment covering 246–256 has biased composition (low complexity); that stretch reads SSRSTEASPSR. S259 carries the phosphoserine modification.

The protein belongs to the PMP-22/EMP/MP20 family. CACNG subfamily. In terms of assembly, interacts with CACNA1C. Identified in a complex with the L-type calcium channel subunits CACNA1C, CACNA2D1 and either CACNB1 or CACNB2. Acts as an auxiliary subunit for AMPA-selective glutamate receptors (AMPARs). Interacts with GRIA1. Detected in heart left ventricle.

It is found in the cell membrane. Its function is as follows. Regulates the activity of L-type calcium channels that contain CACNA1C as pore-forming subunit. Regulates the trafficking and gating properties of AMPA-selective glutamate receptors (AMPARs), including GRIA1 and GRIA4. Promotes their targeting to the cell membrane and synapses and modulates their gating properties by slowing their rates of activation, deactivation and desensitization and by mediating their resensitization. This Homo sapiens (Human) protein is Voltage-dependent calcium channel gamma-4 subunit (CACNG4).